The following is a 177-amino-acid chain: MSWMGHHFSRWCKDISVLSSHLPLFSPMPSEDEHLISNLRSHVPARVVVKQPIRGAIGRTTVAAIVQTGGDWSTGLFSVCRDRKICFWGLLCPMCLECDIARHYGECLCWPLLPGSTFALRIGTRERHRIQGTLCEDCVVVHCCWPFSICQVARELKMRTSQLYEICEVPELKNTLV.

Belongs to the cornifelin family.

The protein is PLAC8-like protein 1 (Plac8l1) of Mus musculus (Mouse).